The following is a 359-amino-acid chain: Cysteine/Cysteine sulfinic acid decarboxylase (359 aa).

In the N-terminal section; belongs to the HFCD (homo-oligomeric flavin containing Cys decarboxylase) superfamily. It in the C-terminal section; belongs to the PPC synthetase family.

It catalyses the reaction L-cysteine + H(+) = cysteamine + CO2. The enzyme catalyses 3-sulfino-L-alanine + H(+) = hypotaurine + CO2. Its activity is regulated as follows. Slightly stimulated in the presence of 1 mM Mg(2+). Its function is as follows. Catalyzes the decarboxylation of L-cysteine to cysteamine and of 3-sulfino-L-alanine (cysteine sulfinic acid) to hypotaurine. Also catalyzes the decarboxylation of various amino acids such as L-lysine, L-glutamate, L-asparaginate and L-proline. In vitro, shows highest activity with L-cysteine as substrate. The chain is Cysteine/Cysteine sulfinic acid decarboxylase from Unknown prokaryotic organism.